Consider the following 306-residue polypeptide: sn-1-specific diacylglycerol lipase ABHD11 (306 aa).

A disordered region spans residues 19-40 (GPSFARVPVAPSSSSGGRGGAE). Low complexity predominate over residues 23–33 (ARVPVAPSSSS). At Lys-78 the chain carries N6-succinyllysine. Catalysis depends on charge relay system residues Ser-132, Asp-228, and His-287.

The protein belongs to the AB hydrolase superfamily. In terms of assembly, interacts with OGDH and DLST; this interaction maintains the functional lipoylation of the 2-oxoglutarate dehydrogenase complex. Post-translationally, phosphorylated. Ubiquitously expressed. Highly expressed in small intestine, prostate and thyroid, while aorta and colon tissues exhibit weak expression levels.

The protein localises to the mitochondrion. It is found in the mitochondrion matrix. It carries out the reaction 1-octadecanoyl-2-(5Z,8Z,11Z,14Z-eicosatetraenoyl)-sn-glycerol + H2O = 2-(5Z,8Z,11Z,14Z-eicosatetraenoyl)-glycerol + octadecanoate + H(+). The enzyme catalyses a 1,2-diacyl-sn-glycerol + H2O = a 2-acylglycerol + a fatty acid + H(+). It catalyses the reaction a 1,3-diacyl-sn-glycerol + H2O = a 1-acyl-sn-glycerol + a fatty acid + H(+). The catalysed reaction is 1-octadecanoyl-2-(9Z-octadecenoyl)-sn-glycerol + H2O = 2-(9Z-octadecenoyl)-glycerol + octadecanoate + H(+). It carries out the reaction 1-octadecanoyl-2-(4Z,7Z,10Z,13Z,16Z,19Z-docosahexaenoyl)-sn-glycerol + H2O = 2-(4Z,7Z,10Z,13Z,16Z,19Z-docosahexaenoyl)-glycerol + octadecanoate + H(+). The enzyme catalyses 1,2-didecanoylglycerol + H2O = decanoylglycerol + decanoate + H(+). In terms of biological role, catalyzes the hydrolysis of diacylglycerol in vitro and may function as a key regulator in lipid metabolism, namely by regulating the intracellular levels of diacylglycerol. 1,2-diacyl-sn-glycerols are the preferred substrate over 1,3-diacyl-sn-glycerols. The enzyme hydrolyzes stearate in preference to palmitate from the sn-1 position of 1,2-diacyl-sn-glycerols. Maintains the functional lipoylation of the 2-oxoglutarate dehydrogenase complex (OGDHc) through its interaction with the OGDHc by preventing the formation of lipoyl adducts. In addition, is also required for the expansion and differentiation of embryonic stem cells (ESCs). This is sn-1-specific diacylglycerol lipase ABHD11 from Homo sapiens (Human).